The primary structure comprises 78 residues: Acyl carrier protein (78 aa).

Residues 2-77 (STIEERVKKI…AAIDYVNAHQ (76 aa)) form the Carrier domain. At S37 the chain carries O-(pantetheine 4'-phosphoryl)serine.

This sequence belongs to the acyl carrier protein (ACP) family. 4'-phosphopantetheine is transferred from CoA to a specific serine of apo-ACP by AcpS. This modification is essential for activity because fatty acids are bound in thioester linkage to the sulfhydryl of the prosthetic group.

The protein resides in the cytoplasm. Its pathway is lipid metabolism; fatty acid biosynthesis. In terms of biological role, carrier of the growing fatty acid chain in fatty acid biosynthesis. The protein is Acyl carrier protein of Pseudomonas entomophila (strain L48).